Reading from the N-terminus, the 290-residue chain is Putative beta-lactamase HcpC (290 aa).

Positions 1–25 (MLENVKKSLFRVLCLGALCLGGLMA) are cleaved as a signal peptide. TPR repeat units lie at residues 29–62 (PKEL…KENS), 64–98 (CFNL…NYSN), 100–133 (CHLL…LKYA), 134–170 (EGCA…NDGD), 172–205 (CTIL…LKDS), 206–242 (PGCF…ENGG), and 244–278 (CFNL…GAKG). Disulfide bonds link Cys-56-Cys-64, Cys-92-Cys-100, Cys-128-Cys-136, Cys-164-Cys-172, Cys-200-Cys-208, Cys-236-Cys-244, and Cys-272-Cys-280.

This sequence belongs to the hcp beta-lactamase family.

The protein resides in the secreted. The enzyme catalyses a beta-lactam + H2O = a substituted beta-amino acid. May hydrolyze 6-aminopenicillinic acid and 7-aminocephalosporanic acid (ACA) derivatives. The sequence is that of Putative beta-lactamase HcpC (hcpC) from Helicobacter pylori (strain J99 / ATCC 700824) (Campylobacter pylori J99).